The chain runs to 272 residues: Indole-3-glycerol phosphate synthase (272 aa).

Belongs to the TrpC family.

The enzyme catalyses 1-(2-carboxyphenylamino)-1-deoxy-D-ribulose 5-phosphate + H(+) = (1S,2R)-1-C-(indol-3-yl)glycerol 3-phosphate + CO2 + H2O. It participates in amino-acid biosynthesis; L-tryptophan biosynthesis; L-tryptophan from chorismate: step 4/5. This Paenarthrobacter aurescens (strain TC1) protein is Indole-3-glycerol phosphate synthase.